The following is a 114-amino-acid chain: Probable 4-amino-4-deoxy-L-arabinose-phosphoundecaprenol flippase subunit ArnE (114 aa).

2 consecutive transmembrane segments (helical) span residues Gly41–Leu61 and Val68–Phe88. Residues Leu43 to Arg112 enclose the EamA domain.

This sequence belongs to the ArnE family. Heterodimer of ArnE and ArnF.

It is found in the cell inner membrane. It participates in bacterial outer membrane biogenesis; lipopolysaccharide biosynthesis. Functionally, translocates 4-amino-4-deoxy-L-arabinose-phosphoundecaprenol (alpha-L-Ara4N-phosphoundecaprenol) from the cytoplasmic to the periplasmic side of the inner membrane. In Pseudomonas fluorescens (strain ATCC BAA-477 / NRRL B-23932 / Pf-5), this protein is Probable 4-amino-4-deoxy-L-arabinose-phosphoundecaprenol flippase subunit ArnE.